Reading from the N-terminus, the 348-residue chain is Probable tRNA pseudouridine synthase B (348 aa).

The Nucleophile role is filled by Asp93. The PUA domain maps to 260 to 335 (LKKIYILDSA…IAVDIERVFM (76 aa)).

It belongs to the pseudouridine synthase TruB family. Type 2 subfamily.

The enzyme catalyses uridine(55) in tRNA = pseudouridine(55) in tRNA. Functionally, could be responsible for synthesis of pseudouridine from uracil-55 in the psi GC loop of transfer RNAs. In Nanoarchaeum equitans (strain Kin4-M), this protein is Probable tRNA pseudouridine synthase B.